The sequence spans 564 residues: Iron-sensing transcriptional repressor (564 aa).

A GATA-type 1 zinc finger spans residues 12-36 (CSNCHKTTTSLWRRGPDNSLLCNAC). The tract at residues 100–170 (ASKSQSGRKS…SSPPHEPSVT (71 aa)) is disordered. Serine 109 carries the phosphoserine modification. Low complexity predominate over residues 109 to 120 (SLSPNPSSVPSS). Residues 135–148 (QIVSDTTTETSNGT) are compositionally biased toward polar residues. A GATA-type 2 zinc finger spans residues 172 to 196 (CQNCATTNTPLWRRDESGNPICNAC). 3 disordered regions span residues 226-285 (GNAN…NTGV), 381-409 (DSSK…NPLG), and 443-496 (LLNP…VQGS). Composition is skewed to polar residues over residues 240 to 253 (SGDS…QSTR), 260 to 271 (SFPNGNGHASGN), 381 to 407 (DSSK…QSNP), and 450 to 486 (PSNS…SPVS).

As to quaternary structure, interacts with tup11.

Its subcellular location is the nucleus. With respect to regulation, activated by iron. Its function is as follows. Transcriptional repressor that binds the consensus promoter sequence 5'-[AT]GATAA-3' during iron-replete conditions to down-regulate transcription of target genes. Represses the expression of the iron transporter fio1 in response to high iron concentrations. Also represses the expression of str1, str2 and str3. Represses the expression of shu1 in presence of iron. In Schizosaccharomyces pombe (strain 972 / ATCC 24843) (Fission yeast), this protein is Iron-sensing transcriptional repressor.